The chain runs to 483 residues: V-type proton ATPase subunit B 2 (483 aa).

It belongs to the ATPase alpha/beta chains family. V-ATPase is a heteromultimeric enzyme composed of a peripheral catalytic V1 complex (main components: subunits A, B, C, D, E, and F) attached to an integral membrane V0 proton pore complex (main component: the proteolipid protein).

Non-catalytic subunit of the peripheral V1 complex of vacuolar ATPase. V-ATPase is responsible for acidifying a variety of intracellular compartments in eukaryotic cells. The polypeptide is V-type proton ATPase subunit B 2 (Hordeum vulgare (Barley)).